We begin with the raw amino-acid sequence, 200 residues long: MKSGDHAAIDVPESSAVAKGKAPLIATPREQKSGFKKGLGIFDFLLRLGAIIAALAAAATMGTSDETLPFFTQFFQFEASYDDLPTFMFFVIAMALIGGYLVLSLPFSIVTIVRPHAVAPRLLLFILDIVALTLTTAAGAAAAAIVYLAHNGNPNTNWLAICQQFGDFCQEVSGAVVASFVTVVVLMSLVLLSGVALKKH.

Residues 1-38 (MKSGDHAAIDVPESSAVAKGKAPLIATPREQKSGFKKG) lie on the Cytoplasmic side of the membrane. The chain crosses the membrane as a helical span at residues 39–59 (LGIFDFLLRLGAIIAALAAAA). At 60–86 (TMGTSDETLPFFTQFFQFEASYDDLPT) the chain is on the extracellular side. Residues 87 to 107 (FMFFVIAMALIGGYLVLSLPF) form a helical membrane-spanning segment. The Cytoplasmic portion of the chain corresponds to 108-121 (SIVTIVRPHAVAPR). A helical membrane pass occupies residues 122–142 (LLLFILDIVALTLTTAAGAAA). Topologically, residues 143 to 171 (AAIVYLAHNGNPNTNWLAICQQFGDFCQE) are extracellular. Residues 172–192 (VSGAVVASFVTVVVLMSLVLL) form a helical membrane-spanning segment. The Cytoplasmic segment spans residues 193–200 (SGVALKKH).

The protein belongs to the Casparian strip membrane proteins (CASP) family. Homodimer and heterodimers.

Its subcellular location is the cell membrane. Functionally, regulates membrane-cell wall junctions and localized cell wall deposition. Required for establishment of the Casparian strip membrane domain (CSD) and the subsequent formation of Casparian strips, a cell wall modification of the root endodermis that determines an apoplastic barrier between the intraorganismal apoplasm and the extraorganismal apoplasm and prevents lateral diffusion. This Theobroma cacao (Cacao) protein is Casparian strip membrane protein 1.